A 156-amino-acid chain; its full sequence is Transcription antitermination protein NusB (156 aa).

It belongs to the NusB family.

Its function is as follows. Involved in transcription antitermination. Required for transcription of ribosomal RNA (rRNA) genes. Binds specifically to the boxA antiterminator sequence of the ribosomal RNA (rrn) operons. The polypeptide is Transcription antitermination protein NusB (Xanthomonas oryzae pv. oryzae (strain MAFF 311018)).